Reading from the N-terminus, the 601-residue chain is MTDIPIDRIRNFSIIAHIDHGKSTLADRLIQLTGALSDREMTNQVLDNMELERERGITIKAQTVRLTYRAKDGLVYALNLMDTPGHVDFAYEVSRSLAACEGSLLVVDASQGVEAQTLANVYQAIDANHEIVPVLNKVDLPAAEPDRVKKQIEDVIGLDASDALMISAKTGLGVDTVLEALVTRLPAPKGNANGELKALLVDSWYDAYLGVIILVRVKDGVLRRGQKIRMMSTGATYTVDQVGVFSPRMTPVETLNPGEMGYINAAIKTVADTNVGDTITDDRVPAAEPLAGFKPSIPVVWCGLYPIDADDFEKLRDSLGKLRLNDASFHFEAETSAALGFGFRCGFLGLLHLEIIQERLSREFDLDLIATAPSVVYKLHKTNGEHLELHNPADMPDGSVIEKIEEPWIKATIMVPDDYLGAILTLCSERRGQQVDLTYVGNRAMAVYRLPLNEVVFDFYDRLKSVSRGYASFDYQMDGYEESDLVRISILVNAEAVDALSFIAHRSAAENRGRQICAKLKELIPRQLFKIAIQAAIGSRIIARETLGALSKDVTAKCYGGDISRKRKLLEKQKEGKKRMRQFGKVEIPQSAFLAALKMDN.

The 183-residue stretch at 7–189 (DRIRNFSIIA…ALVTRLPAPK (183 aa)) folds into the tr-type G domain. GTP-binding positions include 19 to 24 (DHGKST) and 136 to 139 (NKVD).

The protein belongs to the TRAFAC class translation factor GTPase superfamily. Classic translation factor GTPase family. LepA subfamily.

It is found in the cell inner membrane. The enzyme catalyses GTP + H2O = GDP + phosphate + H(+). Functionally, required for accurate and efficient protein synthesis under certain stress conditions. May act as a fidelity factor of the translation reaction, by catalyzing a one-codon backward translocation of tRNAs on improperly translocated ribosomes. Back-translocation proceeds from a post-translocation (POST) complex to a pre-translocation (PRE) complex, thus giving elongation factor G a second chance to translocate the tRNAs correctly. Binds to ribosomes in a GTP-dependent manner. This chain is Elongation factor 4, found in Granulibacter bethesdensis (strain ATCC BAA-1260 / CGDNIH1).